The following is a 324-amino-acid chain: Uric acid degradation bifunctional protein TTL (324 aa).

Ala2 bears the N-acetylalanine mark. Residues Ala2–Leu29 form a required for BRI1-binding region. An OHCU decarboxylase region spans residues Ala2–Lys161. Catalysis depends on His58, which acts as the Proton donor; for OHCU decarboxylase activity. The (S)-allantoin site is built by His58, Pro59, Glu80, Phe111, Ile113, and Ala115. Residues Lys178–Ser324 are HIU hydrolase. Positions Arg182 to Leu190 match the Internal peroxisomal targeting signal (PTS2) motif.

It in the N-terminal section; belongs to the OHCU decarboxylase family. The protein in the C-terminal section; belongs to the transthyretin family. 5-hydroxyisourate hydrolase subfamily. As to quaternary structure, homodimer. Forms tetramers. Interacts with BRI1 in a kinase-dependent manner. Interacts with B1L. Post-translationally, phosphorylated by BRI1 in vitro. In terms of tissue distribution, expressed ubiquitously with highest levels in flowers buds and elongating inflorescences. As to expression, mainly expressed in stems and leaves, and, to a lower extent, in flowers, flower buds and seedlings. Strongly expressed in flower buds and leaves, to a lower extent in stems, and at low levels in seedlings and flowers.

The protein localises to the cell membrane. The protein resides in the peroxisome. Its subcellular location is the cytoplasm. It is found in the cytosol. It carries out the reaction 5-hydroxyisourate + H2O = 5-hydroxy-2-oxo-4-ureido-2,5-dihydro-1H-imidazole-5-carboxylate + H(+). The enzyme catalyses 5-hydroxy-2-oxo-4-ureido-2,5-dihydro-1H-imidazole-5-carboxylate + H(+) = (S)-allantoin + CO2. It participates in purine metabolism; urate degradation; (S)-allantoin from urate: step 2/3. It functions in the pathway purine metabolism; urate degradation; (S)-allantoin from urate: step 3/3. Its function is as follows. Involved in the last two steps of the degradation of uric acid, i.e. the hydrolysis of 5-hydroxyisourate (HIU) to 2-oxo-4-hydroxy-4-carboxy-5-ureidoimidazoline (OHCU) and its stereoselective decarboxylation to (S)-allantoin, a major ureide compound. Might function as a negative regulator to modulate brassinosteroid-mediated plant growth. Together with B1L, prevents plant growth and development, but by opposition to B1L, negatively regulates cold tolerance, probably in a brassinosteroid (BR) and allantoin-dependent manner. The chain is Uric acid degradation bifunctional protein TTL from Arabidopsis thaliana (Mouse-ear cress).